The chain runs to 369 residues: tRNA/tmRNA (uracil-C(5))-methyltransferase (369 aa).

Residues Gln190, Tyr218, Asn223, Glu239, and Asp301 each contribute to the S-adenosyl-L-methionine site. The Nucleophile role is filled by Cys326. The active-site Proton acceptor is the Glu360.

This sequence belongs to the class I-like SAM-binding methyltransferase superfamily. RNA M5U methyltransferase family. TrmA subfamily.

It carries out the reaction uridine(54) in tRNA + S-adenosyl-L-methionine = 5-methyluridine(54) in tRNA + S-adenosyl-L-homocysteine + H(+). The enzyme catalyses uridine(341) in tmRNA + S-adenosyl-L-methionine = 5-methyluridine(341) in tmRNA + S-adenosyl-L-homocysteine + H(+). In terms of biological role, dual-specificity methyltransferase that catalyzes the formation of 5-methyluridine at position 54 (m5U54) in all tRNAs, and that of position 341 (m5U341) in tmRNA (transfer-mRNA). The chain is tRNA/tmRNA (uracil-C(5))-methyltransferase from Vibrio vulnificus (strain CMCP6).